We begin with the raw amino-acid sequence, 498 residues long: Putative antiporter subunit mnhD2 (498 aa).

Transmembrane regions (helical) follow at residues 2-22, 32-52, 78-98, 108-128, 130-150, 161-181, 209-229, 240-260, 271-291, 308-328, 330-350, 369-389, 403-423, and 451-471; these read LSNL…ILVF, YLYL…LIYV, LSLI…AYGF, YHLP…FLTS, LFNL…LITL, IIYV…IGLL, ISLI…FMWL, LAAL…IRFF, IHPL…IGVI, IGFI…GAIF, LVND…LVYI, FGVA…FSGF, GNYI…YSLF, and ILSI…VVLN.

It belongs to the CPA3 antiporters (TC 2.A.63) subunit D family. As to quaternary structure, may form a heterooligomeric complex that consists of seven subunits: mnhA2, mnhB2, mnhC2, mnhD2, mnhE2, mnhF2 and mnhG2.

It is found in the cell membrane. The chain is Putative antiporter subunit mnhD2 (mnhD2) from Staphylococcus aureus (strain JH1).